We begin with the raw amino-acid sequence, 1222 residues long: Chitin synthase 4 (1222 aa).

2 disordered regions span residues 1-101 (MSLP…ERNR) and 138-200 (TERT…KRIE). 2 stretches are compositionally biased toward polar residues: residues 11-24 (QAYN…NSPS) and 42-77 (NQAS…SPDG). A compositionally biased stretch (basic residues) spans 182–196 (SGKIKRKSRRHSKPP). 2 helical membrane passes run 205–225 (PPTF…GFIM) and 243–263 (MGLI…TFGF). Asparagine 378, asparagine 418, and asparagine 440 each carry an N-linked (GlcNAc...) asparagine glycan. Residues 513 to 533 (ALILSVVGVRFFLAIIFQWFI) form a helical membrane-spanning segment. The segment at 576-630 (TVYGSSDRSSKRASFLPTTSRFSSVGGPDIRSQGGRRMPTTMASQSTSNQLLTPN) is disordered. Positions 616 to 630 (TMASQSTSNQLLTPN) are enriched in polar residues. 2 N-linked (GlcNAc...) asparagine glycosylation sites follow: asparagine 637 and asparagine 1030. 3 helical membrane-spanning segments follow: residues 1055-1075 (FIIF…AFTF), 1089-1109 (IIPL…VIIT), and 1113-1133 (WSYI…NFVL). The interval 1202–1222 (GGQTWTSPPGHQYNEEYYSDA) is disordered.

It belongs to the chitin synthase family. Class IV subfamily.

The protein resides in the cell membrane. The enzyme catalyses [(1-&gt;4)-N-acetyl-beta-D-glucosaminyl](n) + UDP-N-acetyl-alpha-D-glucosamine = [(1-&gt;4)-N-acetyl-beta-D-glucosaminyl](n+1) + UDP + H(+). In terms of biological role, polymerizes chitin, a structural polymer of the cell wall and septum, by transferring the sugar moiety of UDP-GlcNAc to the non-reducing end of the growing chitin polymer. Shows additive effects in septum formation with CHS1, CHS2, CHS3A, CHS5, CHS6 and CHS7. Regulates conidiation. Involved in virulence and mediates mycotoxin deoxinivalenol (DON) biosynthesis via the regulation of the expression of TRI4, TRI5 and TRI6. This Gibberella zeae (strain ATCC MYA-4620 / CBS 123657 / FGSC 9075 / NRRL 31084 / PH-1) (Wheat head blight fungus) protein is Chitin synthase 4.